The following is a 431-amino-acid chain: Enolase (431 aa).

Glutamine 167 is a (2R)-2-phosphoglycerate binding site. Glutamate 209 serves as the catalytic Proton donor. 3 residues coordinate Mg(2+): aspartate 246, glutamate 289, and aspartate 316. 4 residues coordinate (2R)-2-phosphoglycerate: lysine 341, arginine 370, serine 371, and lysine 392. The active-site Proton acceptor is the lysine 341.

The protein belongs to the enolase family. As to quaternary structure, component of the RNA degradosome, a multiprotein complex involved in RNA processing and mRNA degradation. It depends on Mg(2+) as a cofactor.

The protein resides in the cytoplasm. The protein localises to the secreted. Its subcellular location is the cell surface. The enzyme catalyses (2R)-2-phosphoglycerate = phosphoenolpyruvate + H2O. It functions in the pathway carbohydrate degradation; glycolysis; pyruvate from D-glyceraldehyde 3-phosphate: step 4/5. Catalyzes the reversible conversion of 2-phosphoglycerate (2-PG) into phosphoenolpyruvate (PEP). It is essential for the degradation of carbohydrates via glycolysis. The protein is Enolase of Shewanella pealeana (strain ATCC 700345 / ANG-SQ1).